Here is a 1254-residue protein sequence, read N- to C-terminus: Juxtamembrane domain-associated catenin (1254 aa).

Disordered regions lie at residues 1 to 38 (MISS…TMRK), 84 to 106 (AGPT…DNPP), and 145 to 209 (PYSN…SAPG). Residues 12–22 (PIPEEGTEADG) show a composition bias toward acidic residues. Residues 145 to 157 (PYSNIDFDSSGLP) are compositionally biased toward polar residues. Fibronectin type-III domains are found at residues 207–302 (APGV…IPIS), 315–411 (APGR…IRPA), 428–518 (PPGQ…LRPT), and 530–624 (ILEA…IEPS). The interval 412–433 (APQRHVPARKVSESVQPPGQPQ) is disordered. The tract at residues 662-685 (MVRESPPLPERDDSPPPLRRANNN) is disordered. ARM repeat units follow at residues 733 to 775 (GGIP…AVME), 777 to 820 (DGVR…ESAT), 874 to 922 (NLIE…YDPA), 969 to 1012 (HVVK…RAAV), and 1016 to 1058 (KGLP…KYAL). The tract at residues 920 to 960 (DPAAAHSSSSKNMKHVASPKPEKKKKDKEKKKDKNPKNIVT) is disordered. Residues 1159 to 1254 (GTARRGDSST…GGGNIDDSWV (96 aa)) are disordered. Over residues 1166–1176 (SSTLARPISSQ) the composition is skewed to polar residues. The segment covering 1177-1187 (GRERPSMHQLD) has biased composition (basic and acidic residues).

Belongs to the beta-catenin family. In terms of assembly, associated with the catenin-cadherin complex consisting of hmr-1, hmp-1 and hmp-2. Interacts with hmr-1. Interacts with picc-1. Epidermal cells.

The protein localises to the cell junction. It localises to the adherens junction. It is found in the nucleus. May act as a positive modulator of hmr-1 function during epidermal morphogenesis. Required for proper localization of other junctional components, such as pac-1. The chain is Juxtamembrane domain-associated catenin (jac-1) from Caenorhabditis elegans.